The sequence spans 116 residues: M-zodatoxin-Lt6a/c (116 aa).

The signal sequence occupies residues 1 to 22 (MKYFVVALTLAVAFVCIEECKT). 2 propeptides span residues 23-44 (VEIGYAVSEDFDQNEIDNDEAR) and 80-83 (EEAR). Short sequence motifs (processing quadruplet motif) lie at residues 41–44 (DEAR) and 80–83 (EEAR). The residue at position 84 (Gln84) is a Pyrrolidone carboxylic acid.

It belongs to the cationic peptide 03 (latarcin) family. 06 subfamily. Cleavage of the propeptide depends on the processing quadruplet motif (XXXR, with at least one of X being E). Expressed by the venom gland.

It is found in the secreted. Its function is as follows. Does not have antimicrobial activity against Gram-positive bacteria (A.globiformis VKM Ac-1112 (MIC&gt;70 uM) and B.subtilis VKM B-501 (MIC&gt;70 uM)), Gram-negative bacteria (E.coli DH5-alpha (MIC&gt;70 uM), E.coli MH1 (MIC&gt;70 uM) and P.aeruginosa PAO1 (MIC&gt;70 uM)), yeast (P.pastoris GS115 (MIC&gt;70 uM) or S.cerevisiae Y190 (MIC&gt;70 uM)). Does not have hemolytic activity against rabbit erythrocytes. However, it causes some conductance changes in planar bilayer membranes, without membrane rupture, suggesting a cytolytic function on other biological targets. It causes paralysis, but is not lethal when injected into insect larvae. The polypeptide is M-zodatoxin-Lt6a/c (Lachesana tarabaevi (Spider)).